Here is a 155-residue protein sequence, read N- to C-terminus: UPF0266 membrane protein lin0773 (155 aa).

Transmembrane regions (helical) follow at residues 8–28 (IFLF…DAVI), 46–66 (RWDG…NTFF), and 70–90 (PFST…ICFF).

Belongs to the UPF0266 family.

It is found in the cell membrane. The sequence is that of UPF0266 membrane protein lin0773 from Listeria innocua serovar 6a (strain ATCC BAA-680 / CLIP 11262).